Consider the following 127-residue polypeptide: Small ribosomal subunit protein uS13 (127 aa).

A disordered region spans residues 93 to 127; the sequence is RRGMPVRGQRTRTNARTRRGRRGQAIGIKKKATKK.

This sequence belongs to the universal ribosomal protein uS13 family. Part of the 30S ribosomal subunit. Forms a loose heterodimer with protein S19. Forms two bridges to the 50S subunit in the 70S ribosome.

Located at the top of the head of the 30S subunit, it contacts several helices of the 16S rRNA. In the 70S ribosome it contacts the 23S rRNA (bridge B1a) and protein L5 of the 50S subunit (bridge B1b), connecting the 2 subunits; these bridges are implicated in subunit movement. Contacts the tRNAs in the A and P-sites. This Chloroflexus aurantiacus (strain ATCC 29366 / DSM 635 / J-10-fl) protein is Small ribosomal subunit protein uS13.